The following is a 173-amino-acid chain: Crossover junction endodeoxyribonuclease RuvC (173 aa).

Residues aspartate 8, glutamate 67, and aspartate 139 contribute to the active site. Mg(2+) contacts are provided by aspartate 8, glutamate 67, and aspartate 139.

Belongs to the RuvC family. Homodimer which binds Holliday junction (HJ) DNA. The HJ becomes 2-fold symmetrical on binding to RuvC with unstacked arms; it has a different conformation from HJ DNA in complex with RuvA. In the full resolvosome a probable DNA-RuvA(4)-RuvB(12)-RuvC(2) complex forms which resolves the HJ. Requires Mg(2+) as cofactor.

The protein resides in the cytoplasm. It catalyses the reaction Endonucleolytic cleavage at a junction such as a reciprocal single-stranded crossover between two homologous DNA duplexes (Holliday junction).. In terms of biological role, the RuvA-RuvB-RuvC complex processes Holliday junction (HJ) DNA during genetic recombination and DNA repair. Endonuclease that resolves HJ intermediates. Cleaves cruciform DNA by making single-stranded nicks across the HJ at symmetrical positions within the homologous arms, yielding a 5'-phosphate and a 3'-hydroxyl group; requires a central core of homology in the junction. The consensus cleavage sequence is 5'-(A/T)TT(C/G)-3'. Cleavage occurs on the 3'-side of the TT dinucleotide at the point of strand exchange. HJ branch migration catalyzed by RuvA-RuvB allows RuvC to scan DNA until it finds its consensus sequence, where it cleaves and resolves the cruciform DNA. The protein is Crossover junction endodeoxyribonuclease RuvC of Cronobacter sakazakii (strain ATCC BAA-894) (Enterobacter sakazakii).